A 327-amino-acid chain; its full sequence is GTP 3',8-cyclase (327 aa).

The Radical SAM core domain occupies 4-226 (AFARDIHYLR…LRLGDHPGIR (223 aa)). GTP is bound at residue arginine 13. The [4Fe-4S] cluster site is built by cysteine 20 and cysteine 24. An S-adenosyl-L-methionine-binding site is contributed by tyrosine 26. Cysteine 27 is a [4Fe-4S] cluster binding site. Arginine 63 lines the GTP pocket. Glycine 67 contacts S-adenosyl-L-methionine. Threonine 94 provides a ligand contact to GTP. Serine 118 provides a ligand contact to S-adenosyl-L-methionine. Lysine 155 provides a ligand contact to GTP. Methionine 189 is an S-adenosyl-L-methionine binding site. [4Fe-4S] cluster-binding residues include cysteine 254 and cysteine 257. 259–261 (RLR) contacts GTP. Position 271 (cysteine 271) interacts with [4Fe-4S] cluster.

It belongs to the radical SAM superfamily. MoaA family. As to quaternary structure, monomer and homodimer. [4Fe-4S] cluster is required as a cofactor.

It carries out the reaction GTP + AH2 + S-adenosyl-L-methionine = (8S)-3',8-cyclo-7,8-dihydroguanosine 5'-triphosphate + 5'-deoxyadenosine + L-methionine + A + H(+). Its pathway is cofactor biosynthesis; molybdopterin biosynthesis. Functionally, catalyzes the cyclization of GTP to (8S)-3',8-cyclo-7,8-dihydroguanosine 5'-triphosphate. This chain is GTP 3',8-cyclase, found in Heliobacterium modesticaldum (strain ATCC 51547 / Ice1).